A 563-amino-acid polypeptide reads, in one-letter code: Arginine--tRNA ligase (563 aa).

The 'HIGH' region signature appears at 121–131 (PNIAKPFSIGH).

Belongs to the class-I aminoacyl-tRNA synthetase family. As to quaternary structure, monomer.

It is found in the cytoplasm. It catalyses the reaction tRNA(Arg) + L-arginine + ATP = L-arginyl-tRNA(Arg) + AMP + diphosphate. The chain is Arginine--tRNA ligase from Streptococcus pneumoniae (strain P1031).